Reading from the N-terminus, the 443-residue chain is Adenylyltransferase and sulfurtransferase UBA4 (443 aa).

ATP-binding positions include Gly-83, Asp-104, 111–115 (SNLHR), Lys-128, and 172–173 (DT). Residues Cys-214 and Cys-217 each coordinate Zn(2+). Cys-231 functions as the Glycyl thioester intermediate; for adenylyltransferase activity in the catalytic mechanism. The Zn(2+) site is built by Cys-292 and Cys-295. In terms of domain architecture, Rhodanese spans 343–441 (QSKAPVLLDV…WSDIVNPKFP (99 aa)). The active-site Cysteine persulfide intermediate; for sulfurtransferase activity is Cys-400.

The protein in the N-terminal section; belongs to the HesA/MoeB/ThiF family. UBA4 subfamily. Requires Zn(2+) as cofactor.

The protein resides in the cytoplasm. Its subcellular location is the cytosol. The protein operates within tRNA modification; 5-methoxycarbonylmethyl-2-thiouridine-tRNA biosynthesis. Its function is as follows. Plays a central role in 2-thiolation of mcm(5)S(2)U at tRNA wobble positions of cytosolic tRNA(Lys), tRNA(Glu) and tRNA(Gln). Acts by mediating the C-terminal thiocarboxylation of sulfur carrier URM1. Its N-terminus first activates URM1 as acyl-adenylate (-COAMP), then the persulfide sulfur on the catalytic cysteine is transferred to URM1 to form thiocarboxylation (-COSH) of its C-terminus. The reaction probably involves hydrogen sulfide that is generated from the persulfide intermediate and that acts as a nucleophile towards URM1. Subsequently, a transient disulfide bond is formed. Does not use thiosulfate as sulfur donor; NFS1 probably acting as a sulfur donor for thiocarboxylation reactions. Prior mcm(5) tRNA modification by the elongator complex is required for 2-thiolation. May also be involved in protein urmylation. In Scheffersomyces stipitis (strain ATCC 58785 / CBS 6054 / NBRC 10063 / NRRL Y-11545) (Yeast), this protein is Adenylyltransferase and sulfurtransferase UBA4.